Consider the following 257-residue polypeptide: OCIA domain-containing protein 1 (257 aa).

Disordered stretches follow at residues 1 to 20 (MDSP…PHPL) and 148 to 257 (YSDE…SWTD). An OCIA domain is found at 1-110 (MDSPLNDGSH…MRLPNSHLGE (110 aa)). Positions 156–170 (GRSTSLNLDTESRPT) are enriched in polar residues. The segment covering 204–216 (EDLRRRNREEYSK) has biased composition (basic and acidic residues).

This sequence belongs to the OCIAD1 family. In terms of assembly, interacts with STAT3 and ARF1. In terms of tissue distribution, expressed in all cells of the primary lymph gland lobe.

The protein localises to the endosome. Functionally, maintains stem cell potency. Involved in endocytic pathways that mediate signaling during hematopoiesis. The chain is OCIA domain-containing protein 1 (asrij) from Drosophila melanogaster (Fruit fly).